We begin with the raw amino-acid sequence, 234 residues long: uncharacterized protein (234 aa).

Position 68 to 70 (68 to 70 (GES)) interacts with L-glutamine. Catalysis depends on C101, which acts as the Nucleophile. L-glutamine contacts are provided by residues R131 and 167 to 168 (IR). Residues H208 and E210 each act as charge relay system in the active site.

Belongs to the glutaminase PdxT/SNO family.

The protein resides in the cytoplasm. The enzyme catalyses L-glutamine + H2O = L-glutamate + NH4(+). This is an uncharacterized protein from Schizosaccharomyces pombe (strain 972 / ATCC 24843) (Fission yeast).